The sequence spans 299 residues: ATP phosphoribosyltransferase (299 aa).

This sequence belongs to the ATP phosphoribosyltransferase family. Long subfamily. Equilibrium between an active dimeric form, an inactive hexameric form and higher aggregates. Interconversion between the various forms is largely reversible and is influenced by the natural substrates and inhibitors of the enzyme. Requires Mg(2+) as cofactor.

It localises to the cytoplasm. The enzyme catalyses 1-(5-phospho-beta-D-ribosyl)-ATP + diphosphate = 5-phospho-alpha-D-ribose 1-diphosphate + ATP. Its pathway is amino-acid biosynthesis; L-histidine biosynthesis; L-histidine from 5-phospho-alpha-D-ribose 1-diphosphate: step 1/9. Feedback inhibited by histidine. Functionally, catalyzes the condensation of ATP and 5-phosphoribose 1-diphosphate to form N'-(5'-phosphoribosyl)-ATP (PR-ATP). Has a crucial role in the pathway because the rate of histidine biosynthesis seems to be controlled primarily by regulation of HisG enzymatic activity. The sequence is that of ATP phosphoribosyltransferase from Salmonella dublin (strain CT_02021853).